A 287-amino-acid polypeptide reads, in one-letter code: Myogenin (287 aa).

Residues S77 and S79 each carry the phosphoserine; by CaMK2G modification. The region spanning 81–132 (DRRRAATLREKRRLKKVNEAFEALKRSTLLNPNQRLPKVEILRSAIQYIERL) is the bHLH domain. A Phosphothreonine; by CaMK2G modification is found at T87.

Homodimer and heterodimer with E12; heterodimerization enhances MYOG DNA-binding and transcriptional activities. Interacts with SMARCA4/BRG1/BAF190A. Interacts (via C-terminal region) with SSRP1 and SUPT16H; the interaction is indicative of an interaction with the FACT complex. Interacts with CSRP3. In terms of processing, phosphorylated by CAMK2G on threonine and serine amino acids in a muscle activity-dependent manner. Phosphorylation of Thr-87 impairs both DNA-binding and trans-activation functions in contracting muscles. As to expression, expressed in muscle (at protein level).

Its subcellular location is the nucleus. Its function is as follows. Acts as a transcriptional activator that promotes transcription of muscle-specific target genes and plays a role in muscle differentiation, cell cycle exit and muscle atrophy. Essential for the development of functional embryonic skeletal fiber muscle differentiation. However is dispensable for postnatal skeletal muscle growth; phosphorylation by CAMK2G inhibits its transcriptional activity in respons to muscle activity. Required for the recruitment of the FACT complex to muscle-specific promoter regions, thus promoting gene expression initiation. During terminal myoblast differentiation, plays a role as a strong activator of transcription at loci with an open chromatin structure previously initiated by MYOD1. Together with MYF5 and MYOD1, co-occupies muscle-specific gene promoter core regions during myogenesis. Also cooperates with myocyte-specific enhancer factor MEF2D and BRG1-dependent recruitment of SWI/SNF chromatin-remodeling enzymes to alter chromatin structure at myogenic late gene promoters. Facilitates cell cycle exit during terminal muscle differentiation through the up-regulation of miR-20a expression, which in turn represses genes involved in cell cycle progression. Binds to the E-box containing (E1) promoter region of the miR-20a gene. Also plays a role in preventing reversal of muscle cell differentiation. Contributes to the atrophy-related gene expression in adult denervated muscles. Induces fibroblasts to differentiate into myoblasts. This chain is Myogenin (Myog), found in Rattus norvegicus (Rat).